Reading from the N-terminus, the 206-residue chain is Eukaryotic translation initiation factor isoform 4E-2 (206 aa).

Cysteines 103 and 142 form a disulfide.

The protein belongs to the eukaryotic initiation factor 4E family. In terms of assembly, EIF4F is a multi-subunit complex, the composition of which varies with external and internal environmental conditions. It is composed of at least EIF4A, EIF4E and EIF4G. EIF4E is also known to interact with other partners. In higher plants two isoforms of EIF4F have been identified, named isoform EIF4F and isoform EIF(iso)4F. Isoform EIF4F has subunits p220 and p26, whereas isoform EIF(iso)4F has subunits p82 and p28. According to the redox status, the Cys-103-Cys-142 disulfide bridge may have a role in regulating protein function by affecting its ability to bind capped mRNA.

Recognizes and binds the 7-methylguanosine-containing mRNA cap during an early step in the initiation of protein synthesis and facilitates ribosome binding by inducing the unwinding of the mRNAs secondary structures. This Oryza sativa subsp. japonica (Rice) protein is Eukaryotic translation initiation factor isoform 4E-2.